Reading from the N-terminus, the 175-residue chain is Large ribosomal subunit protein uL10 (175 aa).

Belongs to the universal ribosomal protein uL10 family. Part of the ribosomal stalk of the 50S ribosomal subunit. The N-terminus interacts with L11 and the large rRNA to form the base of the stalk. The C-terminus forms an elongated spine to which L12 dimers bind in a sequential fashion forming a multimeric L10(L12)X complex.

In terms of biological role, forms part of the ribosomal stalk, playing a central role in the interaction of the ribosome with GTP-bound translation factors. The chain is Large ribosomal subunit protein uL10 from Methylobacterium nodulans (strain LMG 21967 / CNCM I-2342 / ORS 2060).